We begin with the raw amino-acid sequence, 296 residues long: GTPase Era (296 aa).

Positions 7–174 (KCSMSAIVGT…VDYLCETSPY (168 aa)) constitute an Era-type G domain. Residues 15–22 (GTTNAGKS) form a G1 region. 15 to 22 (GTTNAGKS) is a GTP binding site. The interval 41–45 (QTTRV) is G2. The G3 stretch occupies residues 62 to 65 (DTPG). GTP contacts are provided by residues 62 to 66 (DTPGI) and 124 to 127 (NKID). A G4 region spans residues 124-127 (NKID). The segment at 153–155 (ISA) is G5. The KH type-2 domain occupies 205–282 (LRHELPYSLS…HLFLFVKVRE (78 aa)).

Belongs to the TRAFAC class TrmE-Era-EngA-EngB-Septin-like GTPase superfamily. Era GTPase family. As to quaternary structure, monomer.

The protein resides in the cytoplasm. The protein localises to the cell inner membrane. Its function is as follows. An essential GTPase that binds both GDP and GTP, with rapid nucleotide exchange. Plays a role in 16S rRNA processing and 30S ribosomal subunit biogenesis and possibly also in cell cycle regulation and energy metabolism. In Ehrlichia ruminantium (strain Gardel), this protein is GTPase Era.